Reading from the N-terminus, the 299-residue chain is UDP-N-acetylenolpyruvoylglucosamine reductase (299 aa).

Positions 29 to 193 constitute an FAD-binding PCMH-type domain; that stretch reads RIGGPAEIFL…TAASLRFRKA (165 aa). Residue Arg173 is part of the active site. Catalysis depends on Ser222, which acts as the Proton donor. The active site involves Glu292.

The protein belongs to the MurB family. The cofactor is FAD.

It is found in the cytoplasm. The enzyme catalyses UDP-N-acetyl-alpha-D-muramate + NADP(+) = UDP-N-acetyl-3-O-(1-carboxyvinyl)-alpha-D-glucosamine + NADPH + H(+). It functions in the pathway cell wall biogenesis; peptidoglycan biosynthesis. Cell wall formation. In Syntrophotalea carbinolica (strain DSM 2380 / NBRC 103641 / GraBd1) (Pelobacter carbinolicus), this protein is UDP-N-acetylenolpyruvoylglucosamine reductase.